A 172-amino-acid chain; its full sequence is Biogenesis of lysosome-related organelles complex 1 subunit 6 (172 aa).

Pro residues predominate over residues 1 to 10 (MSVPEPPPPD). Disordered stretches follow at residues 1-37 (MSVP…PDEG) and 141-172 (QKRQ…AKRT). A coiled-coil region spans residues 63–167 (DLQRSKRALQ…FEREKQLTAK (105 aa)). The span at 143 to 164 (RQREELEREQQREKEFEREKQL) shows a compositional bias: basic and acidic residues.

Belongs to the BLOC1S6 family. As to quaternary structure, octamer composed of one copy each BLOC1S1, BLOC1S2, BLOC1S3, BLOC1S4, BLOC1S5, BLOC1S6, DTNBP1/BLOC1S7 and SNAPIN/BLOC1S8. Interacts with SNAP47. Homodimer. Component of the biogenesis of lysosome-related organelles complex 1 (BLOC-1) composed of BLOC1S1, BLOC1S2, BLOC1S3, BLOC1S4, BLOC1S5, BLOC1S6, DTNBP1/BLOC1S7 and SNAPIN/BLOC1S8. Interacts with BLOC1S4, BLOC1S5, DTNBP1/BLOC1S7, F-actin, SNAP25 isoform 1 and STX12. Phosphorylated. In terms of tissue distribution, expressed in liver, kidney and spleen (at protein level). Ubiquitously expressed, with the highest expression levels observed in brain, heart, liver and kidney.

It localises to the cytoplasm. It is found in the membrane. Its function is as follows. Component of the BLOC-1 complex, a complex that is required for normal biogenesis of lysosome-related organelles (LRO), such as platelet dense granules and melanosomes. In concert with the AP-3 complex, the BLOC-1 complex is required to target membrane protein cargos into vesicles assembled at cell bodies for delivery into neurites and nerve terminals. The BLOC-1 complex, in association with SNARE proteins, is also proposed to be involved in neurite extension. May play a role in intracellular vesicle trafficking, particularly in the vesicle-docking and fusion process. This Mus musculus (Mouse) protein is Biogenesis of lysosome-related organelles complex 1 subunit 6 (Bloc1s6).